Reading from the N-terminus, the 88-residue chain is Apolipoprotein C-I (88 aa).

The N-terminal stretch at Met1–Ala26 is a signal peptide.

This sequence belongs to the apolipoprotein C1 family.

It is found in the secreted. Inhibitor of lipoprotein binding to the low density lipoprotein (LDL) receptor, LDL receptor-related protein, and very low density lipoprotein (VLDL) receptor. Associates with high density lipoproteins (HDL) and the triacylglycerol-rich lipoproteins in the plasma and makes up about 10% of the protein of the VLDL and 2% of that of HDL. Appears to interfere directly with fatty acid uptake and is also the major plasma inhibitor of cholesteryl ester transfer protein (CETP). Binds free fatty acids and reduces their intracellular esterification. Modulates the interaction of APOE with beta-migrating VLDL and inhibits binding of beta-VLDL to the LDL receptor-related protein. This is Apolipoprotein C-I (APOC1) from Tupaia glis (Common tree shrew).